We begin with the raw amino-acid sequence, 347 residues long: NADH-ubiquinone oxidoreductase chain 2 (347 aa).

The next 11 membrane-spanning stretches (helical) occupy residues 3 to 23, 25 to 45, 59 to 79, 96 to 116, 122 to 144, 149 to 171, 178 to 198, 202 to 222, 247 to 267, 276 to 296, and 326 to 346; these read PLIF…VMMS, HWLM…PLLM, YFLT…INLL, IIMT…FWVP, ISLS…VLYV, INLD…GGLN, ILAY…VFNP, LLNL…FMVA, IMLS…WMII, ITLA…YMRL, and LPVL…ITLL.

This sequence belongs to the complex I subunit 2 family. Core subunit of respiratory chain NADH dehydrogenase (Complex I) which is composed of 45 different subunits. Interacts with TMEM242.

The protein localises to the mitochondrion inner membrane. The catalysed reaction is a ubiquinone + NADH + 5 H(+)(in) = a ubiquinol + NAD(+) + 4 H(+)(out). In terms of biological role, core subunit of the mitochondrial membrane respiratory chain NADH dehydrogenase (Complex I) which catalyzes electron transfer from NADH through the respiratory chain, using ubiquinone as an electron acceptor. Essential for the catalytic activity and assembly of complex I. This Saccopteryx bilineata (Greater white-lined bat) protein is NADH-ubiquinone oxidoreductase chain 2.